A 267-amino-acid polypeptide reads, in one-letter code: Acyl-[acyl-carrier-protein]--UDP-N-acetylglucosamine O-acyltransferase (267 aa).

Belongs to the transferase hexapeptide repeat family. LpxA subfamily. In terms of assembly, homotrimer.

It is found in the cytoplasm. The catalysed reaction is a (3R)-hydroxyacyl-[ACP] + UDP-N-acetyl-alpha-D-glucosamine = a UDP-3-O-[(3R)-3-hydroxyacyl]-N-acetyl-alpha-D-glucosamine + holo-[ACP]. The protein operates within glycolipid biosynthesis; lipid IV(A) biosynthesis; lipid IV(A) from (3R)-3-hydroxytetradecanoyl-[acyl-carrier-protein] and UDP-N-acetyl-alpha-D-glucosamine: step 1/6. In terms of biological role, involved in the biosynthesis of lipid A, a phosphorylated glycolipid that anchors the lipopolysaccharide to the outer membrane of the cell. This chain is Acyl-[acyl-carrier-protein]--UDP-N-acetylglucosamine O-acyltransferase, found in Proteus mirabilis (strain HI4320).